The primary structure comprises 607 residues: Potassium transporter KimA (607 aa).

Topologically, residues 1–30 (MYHSIKRFLIGKPLKSQAAGEQKLTKLKAL) are cytoplasmic. A helical membrane pass occupies residues 31–49 (AMLSSDALSSVAYGTEQIL). The K(+) site is built by D36 and Y43. Over 50 to 62 (IILATISAAAFWY) the chain is Extracellular. The helical transmembrane segment at 63-84 (SIPIAVGVLILLLALILSYRQI) threads the bilayer. Residues 85 to 105 (IYAYPQGGGAYIVSKENLGEK) are Cytoplasmic-facing. Residues 106–134 (PGLIAGGSLLVDYILTVAVSISAGTDAIT) traverse the membrane as a helical segment. K(+) contacts are provided by D117 and S125. The Extracellular segment spans residues 135–142 (SAFPALHD). Residues 143 to 162 (YHVPIAIFLVLVIMILNLRG) traverse the membrane as a helical segment. The Cytoplasmic segment spans residues 163 to 166 (LSES). The helical transmembrane segment at 167–190 (ASILAYPVYLFVVALLVLIAVGLF) threads the bilayer. Topologically, residues 191–214 (KLMTGQIDQPAHHTSLGTPVAGIT) are extracellular. A helical transmembrane segment spans residues 215–238 (LFLLLKAFSSGCSALTGVEAISNA). Residues 239 to 249 (IPAFKNPPARN) lie on the Cytoplasmic side of the membrane. A helical membrane pass occupies residues 250-271 (AARTLAMMGILLAILFSGITVL). Residues 272–298 (AYGYGTAPKPDETVVSQIASETFGRNV) are Extracellular-facing. Residues 299 to 323 (FYYVIQGVTSLILVLAANTGFSAFP) traverse the membrane as a helical segment. The Cytoplasmic portion of the chain corresponds to 324–347 (QLAFNLARDQYMPRMFTVRGDRLG). Residues 348–366 (FSNGIIFLGFASIVLIILF) form a helical membrane-spanning segment. The Extracellular portion of the chain corresponds to 367–372 (GGQTEH). The chain crosses the membrane as a helical span at residues 373 to 393 (LIPLYAVGVFIPFTLSQTGMC). Residues 394–405 (MKWIKQKPKGWI) lie on the Cytoplasmic side of the membrane. Residues 406–428 (GKMLINSCGALISFMVLSILFVT) form a helical membrane-spanning segment. Residues 429–431 (KFN) are Extracellular-facing. The helical transmembrane segment at 432–447 (VVWPVLIFMPIVVLLF) threads the bilayer. The Cytoplasmic portion of the chain corresponds to 448–607 (FAIKNHYTAV…VATLPYHFKK (160 aa)).

Belongs to the amino acid-polyamine-organocation (APC) superfamily. As to quaternary structure, homodimer.

It localises to the cell membrane. It catalyses the reaction K(+)(in) + H(+)(in) = K(+)(out) + H(+)(out). With respect to regulation, potassium uptake increases at lower external pH and is abolished by the proton ionophore carbonyl cyanide m-chlorophenylhydrazone (CCCP). Binds cyclic di-AMP (c-di-AMP), which inhibits the potassium transport activity. Functionally, high-affinity potassium transporter. Functions as a K(+)/H(+) symporter. The polypeptide is Potassium transporter KimA (Bacillus subtilis (strain 168)).